Here is a 356-residue protein sequence, read N- to C-terminus: GTPase Obg (356 aa).

One can recognise an Obg domain in the interval 1–158 (MFIDSVKITL…RLVRLELKLI (158 aa)). The region spanning 159-339 (ADVGLVGFPN…LKFMLLEEIK (181 aa)) is the OBG-type G domain. Residues 165–172 (GFPNVGKS), 190–194 (FTTLT), 212–215 (DIPG), 280–283 (SKSD), and 320–322 (SSL) contribute to the GTP site. Residues Ser-172 and Thr-192 each coordinate Mg(2+).

It belongs to the TRAFAC class OBG-HflX-like GTPase superfamily. OBG GTPase family. In terms of assembly, monomer. It depends on Mg(2+) as a cofactor.

The protein resides in the cytoplasm. Its function is as follows. An essential GTPase which binds GTP, GDP and possibly (p)ppGpp with moderate affinity, with high nucleotide exchange rates and a fairly low GTP hydrolysis rate. Plays a role in control of the cell cycle, stress response, ribosome biogenesis and in those bacteria that undergo differentiation, in morphogenesis control. The polypeptide is GTPase Obg (Campylobacter jejuni subsp. jejuni serotype O:23/36 (strain 81-176)).